Reading from the N-terminus, the 92-residue chain is Ig kappa chain V region 3381 (92 aa).

The segment at 1–23 is framework-1; that stretch reads AFELTQTPASVEAAVGGTVTINC. Residues 24–34 are complementarity-determining-1; the sequence is QASESISNWLA. The segment at 35-49 is framework-2; that stretch reads WYQQKPGQPXKLLIY. A complementarity-determining-2 region spans residues 50 to 56; that stretch reads KASTLAS. Residues 57 to 88 are framework-3; that stretch reads GVSSRFKGSGSGTQFTLTISDLECADAATYYC. The tract at residues 89–92 is complementarity-determining-3; the sequence is QSTD.

The sequence is that of Ig kappa chain V region 3381 from Oryctolagus cuniculus (Rabbit).